A 398-amino-acid chain; its full sequence is Succinate--CoA ligase [ADP-forming] subunit beta (398 aa).

An ATP-grasp domain is found at 9-254 (KAVLREFGVP…ETEEDAKEIE (246 aa)). Residues Lys-46, 53–55 (GRG), Glu-109, Ser-112, and Glu-117 each bind ATP. 2 residues coordinate Mg(2+): Asn-209 and Asp-223. Residues Asn-274 and 331–333 (GIM) contribute to the substrate site.

Belongs to the succinate/malate CoA ligase beta subunit family. As to quaternary structure, heterotetramer of two alpha and two beta subunits. Mg(2+) is required as a cofactor.

The enzyme catalyses succinate + ATP + CoA = succinyl-CoA + ADP + phosphate. It carries out the reaction GTP + succinate + CoA = succinyl-CoA + GDP + phosphate. Its pathway is carbohydrate metabolism; tricarboxylic acid cycle; succinate from succinyl-CoA (ligase route): step 1/1. Its function is as follows. Succinyl-CoA synthetase functions in the citric acid cycle (TCA), coupling the hydrolysis of succinyl-CoA to the synthesis of either ATP or GTP and thus represents the only step of substrate-level phosphorylation in the TCA. The beta subunit provides nucleotide specificity of the enzyme and binds the substrate succinate, while the binding sites for coenzyme A and phosphate are found in the alpha subunit. In Rhodopseudomonas palustris (strain ATCC BAA-98 / CGA009), this protein is Succinate--CoA ligase [ADP-forming] subunit beta.